The sequence spans 197 residues: Transposon Tn10 TetC protein (197 aa).

In terms of domain architecture, HTH tetR-type spans 12 to 72; that stretch reads KSTYQSLVNS…ACYKQQLIMI (61 aa). The segment at residues 35 to 54 is a DNA-binding region (H-T-H motif); the sequence is SIDEISGKALVTKGAFYHHF.

The sequence is that of Transposon Tn10 TetC protein (tetC) from Escherichia coli.